Consider the following 385-residue polypeptide: Zinc finger protein B385R (385 aa).

A C2H2-type zinc finger spans residues 166 to 190 (LQCPNCGCIQELMGTIFDETHFYNH).

This sequence belongs to the asfivirus B385R family.

In Ornithodoros (relapsing fever ticks), this protein is Zinc finger protein B385R.